The primary structure comprises 798 residues: Penicillin-binding protein 1A (798 aa).

Topologically, residues 1–9 (MIKKIMTTC) are cytoplasmic. The helical; Signal-anchor for type II membrane protein transmembrane segment at 10–30 (FGLVFGLCVFAVGLLAIAILA) threads the bilayer. The Periplasmic segment spans residues 31-798 (TYPKLPSLDS…SKRQQLDSLF (768 aa)). The tract at residues 50–218 (LTVYSADGKI…SAYNPIVNPE (169 aa)) is transglycosylase. Glu88 acts as the Proton donor; for transglycosylase activity in catalysis. The segment at 378–700 (RRALGFAARA…GTIAVPVWVD (323 aa)) is transpeptidase. Ser461 (acyl-ester intermediate; for transpeptidase activity) is an active-site residue. A disordered region spans residues 739 to 798 (LMLDNGGAAPQPSRRVKEDDGGAAEGGRQEADDESRQDMQETPVLPSNTDSKRQQLDSLF). Composition is skewed to basic and acidic residues over residues 765–777 (GRQEADDESRQDM) and 788–798 (DSKRQQLDSLF).

This sequence in the N-terminal section; belongs to the glycosyltransferase 51 family. In the C-terminal section; belongs to the transpeptidase family.

The protein localises to the cell inner membrane. It catalyses the reaction [GlcNAc-(1-&gt;4)-Mur2Ac(oyl-L-Ala-gamma-D-Glu-L-Lys-D-Ala-D-Ala)](n)-di-trans,octa-cis-undecaprenyl diphosphate + beta-D-GlcNAc-(1-&gt;4)-Mur2Ac(oyl-L-Ala-gamma-D-Glu-L-Lys-D-Ala-D-Ala)-di-trans,octa-cis-undecaprenyl diphosphate = [GlcNAc-(1-&gt;4)-Mur2Ac(oyl-L-Ala-gamma-D-Glu-L-Lys-D-Ala-D-Ala)](n+1)-di-trans,octa-cis-undecaprenyl diphosphate + di-trans,octa-cis-undecaprenyl diphosphate + H(+). The enzyme catalyses Preferential cleavage: (Ac)2-L-Lys-D-Ala-|-D-Ala. Also transpeptidation of peptidyl-alanyl moieties that are N-acyl substituents of D-alanine.. It functions in the pathway cell wall biogenesis; peptidoglycan biosynthesis. Functionally, cell wall formation. Synthesis of cross-linked peptidoglycan from the lipid intermediates. The enzyme has a penicillin-insensitive transglycosylase N-terminal domain (formation of linear glycan strands) and a penicillin-sensitive transpeptidase C-terminal domain (cross-linking of the peptide subunits). This is Penicillin-binding protein 1A (mrcA) from Neisseria lactamica.